Reading from the N-terminus, the 575-residue chain is Proline--tRNA ligase (575 aa).

It belongs to the class-II aminoacyl-tRNA synthetase family. ProS type 1 subfamily. In terms of assembly, homodimer.

The protein localises to the cytoplasm. It catalyses the reaction tRNA(Pro) + L-proline + ATP = L-prolyl-tRNA(Pro) + AMP + diphosphate. Functionally, catalyzes the attachment of proline to tRNA(Pro) in a two-step reaction: proline is first activated by ATP to form Pro-AMP and then transferred to the acceptor end of tRNA(Pro). As ProRS can inadvertently accommodate and process non-cognate amino acids such as alanine and cysteine, to avoid such errors it has two additional distinct editing activities against alanine. One activity is designated as 'pretransfer' editing and involves the tRNA(Pro)-independent hydrolysis of activated Ala-AMP. The other activity is designated 'posttransfer' editing and involves deacylation of mischarged Ala-tRNA(Pro). The misacylated Cys-tRNA(Pro) is not edited by ProRS. In Solidesulfovibrio magneticus (strain ATCC 700980 / DSM 13731 / RS-1) (Desulfovibrio magneticus), this protein is Proline--tRNA ligase.